The following is a 130-amino-acid chain: Small ribosomal subunit protein uS8 (130 aa).

This sequence belongs to the universal ribosomal protein uS8 family. Part of the 30S ribosomal subunit. Contacts proteins S5 and S12.

Its function is as follows. One of the primary rRNA binding proteins, it binds directly to 16S rRNA central domain where it helps coordinate assembly of the platform of the 30S subunit. The sequence is that of Small ribosomal subunit protein uS8 from Aeromonas hydrophila subsp. hydrophila (strain ATCC 7966 / DSM 30187 / BCRC 13018 / CCUG 14551 / JCM 1027 / KCTC 2358 / NCIMB 9240 / NCTC 8049).